The sequence spans 780 residues: Cullin-5 (780 aa).

The residue at position 34 (serine 34) is a Phosphoserine. Threonine 210 bears the Phosphothreonine mark. Residues 711–772 (RILRTQEAII…HRYIRRDEAD (62 aa)) form the Cullin neddylation domain. A Glycyl lysine isopeptide (Lys-Gly) (interchain with G-Cter in NEDD8) cross-link involves residue lysine 724.

It belongs to the cullin family. In terms of assembly, component of multiple cullin-5-RING E3 ubiquitin-protein ligase complexes (ECS complexes, also named CRL5 complexes) formed of CUL5, Elongin BC (ELOB and ELOC), RNF7/RBX2 and a variable SOCS box domain-containing protein as substrate-specific recognition component. CUL5-containing ECS complexes specifically contain RNF7/RBX2, and not RBX1, as catalytic subunit. Component of the ECS(ASB2) complex with the substrate recognition component ASB2. Component of the ECS(ASB6) complex with the substrate recognition component ASB6. Component of the ECS(ASB7) complex with the substrate recognition component ASB7. Component of the ECS(ASB9) complex with the substrate recognition component ASB9. Component of the ECS(ASB11) complex with the substrate recognition component ASB11. Component of the ECS(ASB12) complex with the substrate recognition component ASB12. Component of the ECS(LRRC41) complex with the substrate recognition component LRRC41. Component of the ECS(SOCS1) complex with the substrate recognition component SOCS1. Component of the ECS(SOCS2) complex with the substrate recognition component SOCS2. Component of the ECS(WSB1) complex with the substrate recognition subunit WSB1. Component of the ECS(SOCS3) complex with the substrate recognition component SOCS3. Component of the ECS(SOCS7) complex with the substrate recognition component SOCS7. Component of the ECS(SPSB1) complex with the substrate recognition component SPSB1. Component of the ECS(SPSB3) complex with the substrate recognition component SPSB3. Component of the ECS(SPSB2) complex with the substrate recognition component SPSB2. Component of the ECS(SPSB4) complex with the substrate recognition component SPSB4. Component of the ECS(RAB40) complex with the substrate recognition subunit RAB40A, RAB40B or RAB40C. Component of the ECS(KLHDC1) complex with the substrate recognition component KLHDC1. Component of the ECS(PCMTD1) complex with the substrate recognition subunit PCMTD1. May also form complexes containing RBX1 and ELOA or VHL; additional evidence is however required to confirm this result in vivo. Interacts (when neddylated) with ARIH2; leading to activate the E3 ligase activity of ARIH2. Interacts with ERCC6; the interaction is induced by DNA damaging agents or inhibitors of RNA polymerase II elongation. Interacts with ELOA (via the BC-box). Interacts (unneddylated form) with DCUN1D1, DCUN1D2, DCUN1D3, DCUN1D4 and DCUN1D5; these interactions promote the cullin neddylation. In terms of processing, neddylated; which enhances the ubiquitination activity of ECS complexes and prevents binding of the inhibitor CAND1. Deneddylated via its interaction with the COP9 signalosome (CSN).

It localises to the nucleus. The protein operates within protein modification; protein ubiquitination. Functionally, core component of multiple cullin-5-RING E3 ubiquitin-protein ligase complexes (ECS complexes, also named CRL5 complexes), which mediate the ubiquitination and subsequent proteasomal degradation of target proteins. Acts a scaffold protein that contributes to catalysis through positioning of the substrate and the ubiquitin-conjugating enzyme. The functional specificity of the E3 ubiquitin-protein ligase complex depends on the variable SOCS box-containing substrate recognition component. Acts as a key regulator of neuron positioning during cortex development: component of various SOCS-containing ECS complexes, such as the ECS(SOCS7) complex, that regulate reelin signaling by mediating ubiquitination and degradation of DAB1. ECS(SOCS1) seems to direct ubiquitination of JAK2. The ECS(SOCS2) complex mediates the ubiquitination and subsequent proteasomal degradation of phosphorylated EPOR and GHR. The ECS(SPSB3) complex catalyzes ubiquitination of nuclear CGAS. ECS(KLHDC1) complex is part of the DesCEND (destruction via C-end degrons) pathway and mediates ubiquitination and degradation of truncated SELENOS selenoprotein produced by failed UGA/Sec decoding, which ends with a glycine. The ECS(ASB9) complex mediates ubiquitination and degradation of CKB. As part of some ECS complex, promotes 'Lys-11'-linked ubiquitination and degradation of BTRC. As part of a multisubunit ECS complex, polyubiquitinates monoubiquitinated POLR2A. As part of the ECS(RAB40C) complex, mediates ANKRD28 ubiquitination and degradation, thereby regulating protein phosphatase 6 (PP6) complex activity and focal adhesion assembly during cell migration. As part of the ECS(RAB40A) complex, mediates RHOU 'Lys-48'-linked ubiquitination and degradation, thus inhibiting focal adhesion disassembly during cell migration. As part of the ECS(RAB40B) complex, mediates LIMA1/EPLIN and RAP2 ubiquitination, thereby regulating actin cytoskeleton dynamics and stress fiber formation during cell migration. May form a cell surface vasopressin receptor. The chain is Cullin-5 from Mus musculus (Mouse).